A 449-amino-acid chain; its full sequence is C4-dicarboxylate transport protein (449 aa).

8 helical membrane passes run Tyr20 to Pro42, Ile62 to Val84, Ala91 to Val113, Ile164 to Ala181, Leu202 to Lys224, Ser239 to Phe261, Leu344 to Ile366, and Ala370 to Val389.

Belongs to the dicarboxylate/amino acid:cation symporter (DAACS) (TC 2.A.23) family.

It localises to the cell inner membrane. Responsible for the transport of dicarboxylates such as succinate, fumarate, and malate from the periplasm across the inner membrane. The chain is C4-dicarboxylate transport protein (dctA) from Xylella fastidiosa (strain 9a5c).